The sequence spans 1021 residues: Sodium/potassium-transporting ATPase subunit alpha-1 (1021 aa).

The propeptide occupies 1–5 (MGKGG). Residues 1–11 (MGKGGGRDKYE) show a composition bias toward basic and acidic residues. The tract at residues 1–37 (MGKGGGRDKYEPAAISEHGNKKKAKKERDMDELKKEV) is disordered. The Cytoplasmic segment spans residues 6–85 (GRDKYEPAAI…NALTPPPTTP (80 aa)). Residue K9 is modified to N6-acetyllysine. Y10 is subject to Phosphotyrosine. S16 is subject to Phosphoserine; by PKC. Residue K21 is modified to N6-acetyllysine. The span at 26–37 (KERDMDELKKEV) shows a compositional bias: basic and acidic residues. Phosphoserine is present on residues S38 and S45. Residues 80–82 (PPP) are phosphoinositide-3 kinase binding. Residues 86–106 (EWVKFCRQLFGGFSMLLWIGA) traverse the membrane as a helical segment. Residues 107–129 (ILCFLAYGIQAATEEEPQNDNLY) are Extracellular-facing. Residues 130–150 (LGVVLSAVVIITGCFSYYQEA) traverse the membrane as a helical segment. Topologically, residues 151-286 (KSSKIMESFK…GGQTPIAAEI (136 aa)) are cytoplasmic. The tract at residues 214 to 233 (SSLTGESEPQTRSPDFTNEN) is disordered. At S226 the chain carries Phosphoserine. Y258 is modified (phosphotyrosine). A helical membrane pass occupies residues 287–306 (EHFIHIITGVAVFLGVTFFI). Residues 307-318 (LSLILEYTWLEA) are Extracellular-facing. A helical transmembrane segment spans residues 319–336 (VIFLIGIIVANVPEGLLA). The Cytoplasmic portion of the chain corresponds to 337-770 (TVTVCLTLTA…EEGRLIFDNL (434 aa)). The 4-aspartylphosphate intermediate role is filled by D374. A phosphoserine mark is found at S450 and S482. K485 serves as a coordination point for ATP. Phosphotyrosine is present on Y540. The segment at 594 to 715 (RAAVPDAVGK…QGAIVAVTGD (122 aa)) is mediates interaction with SCN7A. An N6-succinyllysine modification is found at K659. S666 carries the post-translational modification Phosphoserine. D715 and D719 together coordinate Mg(2+). Residues 771-790 (KKSIAYTLTSNIPEITPFLI) traverse the membrane as a helical segment. Residues 791–800 (FIIANIPLPL) are Extracellular-facing. Residues 801 to 821 (GTVTILCIDLGTDMVPAISLA) form a helical membrane-spanning segment. Topologically, residues 822-841 (YEQAESDIMKRQPRNPQTDK) are cytoplasmic. A helical membrane pass occupies residues 842–864 (LVNERLISMAYGQIGMIQALGGF). The Extracellular segment spans residues 865–916 (FTYFVILAENGFLPIHLLGLRVDWDDRWVNDVEDSYGQQWTYEQRKIVEFTC). A helical membrane pass occupies residues 917–936 (HTAFFVSIVVVQWADLVICK). The Cytoplasmic segment spans residues 937-949 (TRRNSVFQQGMKN). Residue S941 is modified to Phosphoserine; by PKA. The chain crosses the membrane as a helical span at residues 950–968 (KILIFGLFEETALAAFLSY). The Extracellular segment spans residues 969-983 (CPGMGVALRMYPLKP). A helical transmembrane segment spans residues 984–1004 (TWWFCAFPYSLLIFVYDEVRK). Topologically, residues 1005–1021 (LIIRRRPGGWVEKETYY) are cytoplasmic.

Belongs to the cation transport ATPase (P-type) (TC 3.A.3) family. Type IIC subfamily. In terms of assembly, the sodium/potassium-transporting ATPase is composed of a catalytic alpha subunit, an auxiliary non-catalytic beta subunit and an additional regulatory subunit. Interacts with regulatory subunit FXYD1. Interacts with regulatory subunit FXYD3. Interacts with SIK1. Interacts with SLC35G1 and STIM1. Interacts with CLN3; this interaction regulates the sodium/potassium-transporting ATPase complex localization at the plasma membrane. Interacts with SCN7A; activates ATP1A1 P-type sodium:potassium-exchanging transporter activity which indirectly signals to nearby neurons to regulate sodium homeostasis. Post-translationally, phosphorylation on Tyr-10 modulates pumping activity. Phosphorylation of Ser-941 by PKA modulates the response of ATP1A1 to PKC. Dephosphorylation by protein phosphatase 2A (PP2A) following increases in intracellular sodium, leading to increase catalytic activity.

The protein resides in the cell membrane. Its subcellular location is the basolateral cell membrane. It localises to the sarcolemma. The protein localises to the cell projection. It is found in the axon. The protein resides in the melanosome. The enzyme catalyses K(+)(out) + Na(+)(in) + ATP + H2O = K(+)(in) + Na(+)(out) + ADP + phosphate + H(+). This is the catalytic component of the active enzyme, which catalyzes the hydrolysis of ATP coupled with the exchange of sodium and potassium ions across the plasma membrane. This action creates the electrochemical gradient of sodium and potassium ions, providing the energy for active transport of various nutrients. Could also be part of an osmosensory signaling pathway that senses body-fluid sodium levels and controls salt intake behavior as well as voluntary water intake to regulate sodium homeostasis. The sequence is that of Sodium/potassium-transporting ATPase subunit alpha-1 (ATP1A1) from Equus caballus (Horse).